A 504-amino-acid chain; its full sequence is Probable protein phosphatase 2C 18 (504 aa).

The segment at 1–49 (MGLCYSVDRTTGKEPGEASSTATTAETVEERSGSGRWRRPRDLKGGGDI) is disordered. A compositionally biased stretch (low complexity) spans 17-26 (EASSTATTAE). Residues 67–399 (IACLYTQQGK…DDCTVVCLFL (333 aa)) form the PPM-type phosphatase domain. Residues D103, G104, D344, and D390 each coordinate Mn(2+). Residues 410–435 (TNVKKDSPKEESIESVTNSTSKEEDE) are disordered. Residues 412–421 (VKKDSPKEES) show a composition bias toward basic and acidic residues.

It belongs to the PP2C family. The cofactor is Mg(2+). Mn(2+) serves as cofactor.

The enzyme catalyses O-phospho-L-seryl-[protein] + H2O = L-seryl-[protein] + phosphate. It catalyses the reaction O-phospho-L-threonyl-[protein] + H2O = L-threonyl-[protein] + phosphate. This chain is Probable protein phosphatase 2C 18, found in Arabidopsis thaliana (Mouse-ear cress).